The primary structure comprises 1683 residues: E3 ubiquitin-protein ligase SHPRH (1683 aa).

Positions 1–43 are disordered; that stretch reads MSSRRKRAPPVRVDEEKRQQLHWNMHEDRRNEPIIISDDDEQP. Positions 12–32 are enriched in basic and acidic residues; it reads RVDEEKRQQLHWNMHEDRRNE. Position 266 is a phosphoserine (S266). A Helicase ATP-binding; first part domain is found at 307 to 389; the sequence is YQREAVNWML…TVEVLALILT (83 aa). 373 to 380 provides a ligand contact to ATP; the sequence is DEMGLGKT. The region spanning 438–512 is the H15 domain; it reads QCPPTRVMIL…GFSGTFTLGK (75 aa). Residues 525–607 form a disordered region; it reads KQAVGSPRKI…QGHCPATSDS (83 aa). Over residues 534–547 the composition is skewed to basic and acidic residues; that stretch reads IQKETRKSGNKDTD. Residues 568 to 588 are compositionally biased toward basic residues; sequence KSRRNRSKLRKKLVPSTKKGK. At S635 the chain carries Phosphoserine. A PHD-type zinc finger spans residues 658 to 709; sequence RFECICGELDQIDRKPRVQCLKCHLWQHAKCVNYDEKNLKIKPFYCPHCLVA. Positions 710–868 constitute a Helicase ATP-binding; second part domain; that stretch reads MEPVSTRATL…FGLVVFLGIE (159 aa). The short motif at 819 to 822 is the DEAQ box element; the sequence is DEAQ. The RING-type zinc-finger motif lies at 1432–1479; it reads CPICARQLGKQWAVLTCGHCFCNECISIIIEQYSVGSHRSSIKCAICR. The region spanning 1514–1672 is the Helicase C-terminal domain; the sequence is AVVRTLMKIQ…ASVLTVADLA (159 aa).

Belongs to the SNF2/RAD54 helicase family. Homodimer. Interacts with HLTF, PCNA, UBE2N and RAD18. In terms of tissue distribution, broadly expressed.

It catalyses the reaction S-ubiquitinyl-[E2 ubiquitin-conjugating enzyme]-L-cysteine + [acceptor protein]-L-lysine = [E2 ubiquitin-conjugating enzyme]-L-cysteine + N(6)-ubiquitinyl-[acceptor protein]-L-lysine.. Its pathway is protein modification; protein ubiquitination. Its function is as follows. E3 ubiquitin-protein ligase involved in DNA repair. Upon genotoxic stress, accepts ubiquitin from the UBE2N-UBE2V2 E2 complex and transfers it to 'Lys-164' of PCNA which had been monoubiquitinated by UBE2A/B-RAD18, promoting the formation of non-canonical poly-ubiquitin chains linked through 'Lys-63'. The sequence is that of E3 ubiquitin-protein ligase SHPRH (SHPRH) from Homo sapiens (Human).